The chain runs to 917 residues: Hexokinase-1 (917 aa).

An N-acetylmethionine modification is found at Met1. The tract at residues 1–10 is mitochondrial-binding peptide (MBP); sequence MIAAQLLAYY. 2 Hexokinase domains span residues 16–458 and 464–906; these read DDQV…MVTA and AEQH…LITA. ATP-binding positions include Arg30 and 84 to 89; that span reads DLGGSS. Residues 73-207 are hexokinase small subdomain 1; the sequence is DGSEKGDFIA…DYDANIVAVV (135 aa). Residue 84 to 91 coordinates D-glucose 6-phosphate; sequence DLGGSSFR. D-glucose contacts are provided by residues Ser155, 172–173, and 208–209; these read TK and ND. The hexokinase large subdomain 1 stretch occupies residues 208–447; that stretch reads NDTVGTMMTC…SDVRFLLSES (240 aa). Residues Asp209 and Thr232 each coordinate D-glucose 6-phosphate. D-glucose is bound by residues Asn235, Glu260, and 291–294; that span reads QLFE. At Ser337 the chain carries Phosphoserine. Asn345 is a binding site for ATP. 413-415 is a D-glucose 6-phosphate binding site; that stretch reads DGS. Residue 425–426 participates in ATP binding; that stretch reads RR. D-glucose 6-phosphate is bound by residues Ser449 and 532 to 536; that span reads DLGGT. The segment at 521–655 is hexokinase small subdomain 2; sequence DGTENGDFLA…EFDLDVVAVV (135 aa). Residue 532–537 coordinates ATP; that stretch reads DLGGTN. Residues 603–604, 620–621, and 656–657 each bind D-glucose; these read SF, TK, and ND. Residues 656-895 are hexokinase large subdomain 2; that stretch reads NDTVGTMMTC…CNVSFLLSED (240 aa). D-glucose 6-phosphate-binding residues include Asp657 and Thr680. Residue Thr680 coordinates ATP. D-glucose contacts are provided by residues 682-683, Glu708, and Glu742; that span reads SN. Residues 747-748, 784-788, and 863-867 contribute to the ATP site; these read GM, TKFLS, and TLYKL. D-glucose 6-phosphate is bound by residues 861–863 and Ser897; that span reads DGT.

Belongs to the hexokinase family. Monomer. Interacts with RABL2/RABL2A; binds preferentially to GTP-bound RABL2. Interacts with VDAC1. The HK1-VDAC1 complex interacts with ATF2. Interacts (via N-terminal spermatogenic cell-specific region) with PFKM (via C-terminus). Interacts with SMAD5. In terms of tissue distribution, isoform 2: Erythrocyte specific. Isoform 3: Testis-specific. Isoform 4: Testis-specific.

It localises to the mitochondrion outer membrane. The protein localises to the cytoplasm. It is found in the cytosol. It catalyses the reaction a D-hexose + ATP = a D-hexose 6-phosphate + ADP + H(+). The catalysed reaction is D-fructose + ATP = D-fructose 6-phosphate + ADP + H(+). It carries out the reaction D-glucose + ATP = D-glucose 6-phosphate + ADP + H(+). The enzyme catalyses D-mannose + ATP = D-mannose 6-phosphate + ADP + H(+). It catalyses the reaction D-glucosamine + ATP = D-glucosamine 6-phosphate + ADP + H(+). It functions in the pathway carbohydrate metabolism; hexose metabolism. Its pathway is carbohydrate degradation; glycolysis; D-glyceraldehyde 3-phosphate and glycerone phosphate from D-glucose: step 1/4. Its activity is regulated as follows. Hexokinase is an allosteric enzyme inhibited by its product D-glucose 6-phosphate. Hexokinase activity is inhibited by N-acetyl-D-glucosamine. In terms of biological role, catalyzes the phosphorylation of various hexoses, such as D-glucose, D-glucosamine, D-fructose, D-mannose and 2-deoxy-D-glucose, to hexose 6-phosphate (D-glucose 6-phosphate, D-glucosamine 6-phosphate, D-fructose 6-phosphate, D-mannose 6-phosphate and 2-deoxy-D-glucose 6-phosphate, respectively). Does not phosphorylate N-acetyl-D-glucosamine. Mediates the initial step of glycolysis by catalyzing phosphorylation of D-glucose to D-glucose 6-phosphate. Involved in innate immunity and inflammation by acting as a pattern recognition receptor for bacterial peptidoglycan. When released in the cytosol, N-acetyl-D-glucosamine component of bacterial peptidoglycan inhibits the hexokinase activity of HK1 and causes its dissociation from mitochondrial outer membrane, thereby activating the NLRP3 inflammasome. The protein is Hexokinase-1 of Homo sapiens (Human).